The chain runs to 170 residues: Cyclic dof factor 4 (170 aa).

The interval asparagine 25–glutamate 51 is disordered. A Dof-type zinc finger spans residues isoleucine 58–proline 112. Residues cysteine 60, cysteine 63, cysteine 85, and cysteine 88 each contribute to the Zn(2+) site.

In terms of tissue distribution, expressed in the vasculature of cotyledons and hypocotyls, leaves and roots.

It is found in the nucleus. Its function is as follows. Transcription factor that binds specifically to a 5'-AA[AG]G-3' consensus core sequence. Transcriptional repressor of 'CONSTANS' expression. Regulates a photoperiodic flowering response. This chain is Cyclic dof factor 4 (CDF4), found in Arabidopsis thaliana (Mouse-ear cress).